Consider the following 55-residue polypeptide: Mitochondrial import receptor subunit TOM7 homolog (55 aa).

The Cytoplasmic portion of the chain corresponds to 1–20 (MVKLSKEAKQRLQQLFKGGQ). A helical membrane pass occupies residues 21 to 36 (FAIRWGFIPLVIYLGF). Over 37–55 (KRGADPGMPEPTVLSLLWG) the chain is Mitochondrial intermembrane.

This sequence belongs to the Tom7 family. Forms part of the preprotein translocase complex of the outer mitochondrial membrane (TOM complex) which consists of at least 7 different proteins (TOMM5, TOMM6, TOMM7, TOMM20, TOMM22, TOMM40 and TOMM70).

It localises to the mitochondrion outer membrane. Functionally, required for assembly and stability of the TOM complex. Positive regulator of PRKN translocation to damaged mitochondria. Acts probably by stabilizing PINK1 on the outer membrane of depolarized mitochondria. The protein is Mitochondrial import receptor subunit TOM7 homolog (TOMM7) of Bos taurus (Bovine).